Consider the following 238-residue polypeptide: Nucleoside diphosphate kinase III, chloroplastic/mitochondrial (238 aa).

The N-terminal 85 residues, 1–85 (MSSQICRSAS…YMIQDQEVLA (85 aa)), are a transit peptide targeting the chloroplast and mitochondrion. ATP is bound by residues K96, F144, R172, T178, R189, and N199. The Pros-phosphohistidine intermediate role is filled by H202.

The protein belongs to the NDK family. Homohexamer. The cofactor is Mg(2+).

The protein resides in the plastid. The protein localises to the chloroplast thylakoid lumen. Its subcellular location is the mitochondrion intermembrane space. The enzyme catalyses a 2'-deoxyribonucleoside 5'-diphosphate + ATP = a 2'-deoxyribonucleoside 5'-triphosphate + ADP. It carries out the reaction a ribonucleoside 5'-diphosphate + ATP = a ribonucleoside 5'-triphosphate + ADP. In terms of biological role, major role in the synthesis of nucleoside triphosphates other than ATP. The ATP gamma phosphate is transferred to the NDP beta phosphate via a ping-pong mechanism, using a phosphorylated active-site intermediate. Shows the highest specificity towards GDP. This chain is Nucleoside diphosphate kinase III, chloroplastic/mitochondrial (NDPK3), found in Arabidopsis thaliana (Mouse-ear cress).